Here is a 90-residue protein sequence, read N- to C-terminus: U7-theraphotoxin-Hhn1l (90 aa).

The signal sequence occupies residues 1–19 (MKTAIFTVVLALAVFAVLS). A propeptide spanning residues 20–50 (FGWEANEKALSEEFTELIHEKEAASETEARE) is cleaved from the precursor. 3 disulfides stabilise this stretch: cysteine 51-cysteine 65, cysteine 58-cysteine 70, and cysteine 64-cysteine 81.

The protein belongs to the neurotoxin 10 (Hwtx-1) family. 13 (Hntx-13) subfamily. Expressed by the venom gland.

It localises to the secreted. In terms of biological role, ion channel inhibitor. This chain is U7-theraphotoxin-Hhn1l, found in Cyriopagopus hainanus (Chinese bird spider).